A 205-amino-acid polypeptide reads, in one-letter code: Endoplasmic reticulum membrane protein complex subunit 10 (205 aa).

The first 17 residues, 1 to 17 (MLVRLLRVILLASMVFC), serve as a signal peptide directing secretion. The Lumenal segment spans residues 18 to 172 (ADILQLSYSD…VKEVSWFQKN (155 aa)). An N-linked (GlcNAc...) asparagine glycan is attached at Asn-47. Residues 173–190 (WKMLLLGLLIYNFVAGSA) traverse the membrane as a helical segment. Residues 191–205 (KKQQQGGAGADQKTE) are Cytoplasmic-facing.

Component of the ER membrane protein complex (EMC).

Its subcellular location is the endoplasmic reticulum membrane. In terms of biological role, part of the endoplasmic reticulum membrane protein complex (EMC) that enables the energy-independent insertion into endoplasmic reticulum membranes of newly synthesized membrane proteins. Preferentially accommodates proteins with transmembrane domains that are weakly hydrophobic or contain destabilizing features such as charged and aromatic residues. Involved in the cotranslational insertion of multi-pass membrane proteins in which stop-transfer membrane-anchor sequences become ER membrane spanning helices. It is also required for the post-translational insertion of tail-anchored/TA proteins in endoplasmic reticulum membranes. By mediating the proper cotranslational insertion of N-terminal transmembrane domains in an N-exo topology, with translocated N-terminus in the lumen of the ER, controls the topology of multi-pass membrane proteins. This chain is Endoplasmic reticulum membrane protein complex subunit 10, found in Saccharomyces cerevisiae (strain ATCC 204508 / S288c) (Baker's yeast).